Here is an 89-residue protein sequence, read N- to C-terminus: Small ribosomal subunit protein bS20 (89 aa).

The segment covering 1–12 (MANHKSAIKRHR) has biased composition (basic residues). Positions 1–26 (MANHKSAIKRHRQSVERAGRNRAART) are disordered.

The protein belongs to the bacterial ribosomal protein bS20 family.

Functionally, binds directly to 16S ribosomal RNA. This chain is Small ribosomal subunit protein bS20, found in Desulfovibrio desulfuricans (strain ATCC 27774 / DSM 6949 / MB).